A 194-amino-acid chain; its full sequence is UPF0215 protein Mbar_A0619 (194 aa).

It belongs to the UPF0215 family.

The sequence is that of UPF0215 protein Mbar_A0619 from Methanosarcina barkeri (strain Fusaro / DSM 804).